The sequence spans 122 residues: Large ribosomal subunit protein uL14 (122 aa).

This sequence belongs to the universal ribosomal protein uL14 family. In terms of assembly, part of the 50S ribosomal subunit. Forms a cluster with proteins L3 and L19. In the 70S ribosome, L14 and L19 interact and together make contacts with the 16S rRNA in bridges B5 and B8.

Functionally, binds to 23S rRNA. Forms part of two intersubunit bridges in the 70S ribosome. The polypeptide is Large ribosomal subunit protein uL14 (Rickettsia massiliae (strain Mtu5)).